Consider the following 304-residue polypeptide: E3 ubiquitin-protein ligase RNF144B (304 aa).

Residues 27-245 form a TRIAD supradomain region; sequence PLVTCKLCLC…YDRGPCRNKL (219 aa). Residues C31, C34, C54, C57, C122, C127, C146, C149, C154, C157, H162, C167, C194, and C197 each coordinate Zn(2+). The segment at 31 to 81 adopts an RING-type 1 zinc-finger fold; it reads CKLCLCEQSLDKMTTLQECRCIFCTACLKQYMQLAIREGCGSPITCPDMVC. The segment at 102–167 adopts an IBR-type zinc-finger fold; sequence QLYQRLKFER…KDAWHAEVSC (66 aa). The RING-type 2; atypical zinc finger occupies 194–223; that stretch reads CPVCRVYIERNEGCAQMMCKNCKHTFCWYC. C207 is an active-site residue. Zn(2+)-binding residues include C212, C215, C220, C223, H235, and C241. The helical transmembrane segment at 259-279 threads the bilayer; the sequence is VVGILVGLGIIALVTSPLLLL.

It belongs to the RBR family. RNF144 subfamily. Interacts with UBE2L3, UBE2L6 and LCMT2, as well as with BAX. Interacts with TBK1; this interaction inhibits TBK1 phosphorylation and 'Lys-63'-linked polyubiquitination. Post-translationally, auto-ubiquitinated.

It localises to the mitochondrion membrane. The protein localises to the cytoplasm. It carries out the reaction [E2 ubiquitin-conjugating enzyme]-S-ubiquitinyl-L-cysteine + [acceptor protein]-L-lysine = [E2 ubiquitin-conjugating enzyme]-L-cysteine + [acceptor protein]-N(6)-ubiquitinyl-L-lysine.. It participates in protein modification; protein ubiquitination. E3 ubiquitin-protein ligase which accepts ubiquitin from E2 ubiquitin-conjugating enzymes UBE2L3 and UBE2L6 in the form of a thioester and then directly transfers the ubiquitin to targeted substrates such as LCMT2, thereby promoting their degradation. Induces apoptosis via a p53/TP53-dependent but caspase-independent mechanism. Plays a crucial role in maintaining the genomic stability by controlling the degradation of multiple proteins involved in mitotic progression and DNA damage. Regulates epithelial homeostasis by mediating degradation of CDKN1A and isoform 2 of TP63. Plays a regulatory role in innate immunity by negatively regulating IRF3 activation and IFN-beta production. Mechanistically, inhibits TBK1 phosphorylation and 'Lys-63'-linked polyubiquitination independently of its E3 ligase activity. Alternatively, promotes 'Lys-27' and 'Lys-33'-linked ubiquitination of IFIH1/MDA5, promoting selective autophagic degradation of IFIH1/MDA5 to inhibit antiviral response. The chain is E3 ubiquitin-protein ligase RNF144B (RNF144B) from Bos taurus (Bovine).